The following is a 483-amino-acid chain: CdaA regulatory protein CdaR (483 aa).

The helical transmembrane segment at 9–26 (WAVKIIALLFALLLYVAV) threads the bilayer. YbbR-like domains are found at residues 55–135 (IPVK…TVTI), 143–228 (FPVE…KITV), 237–316 (VPFK…TLHI), and 329–394 (VPIK…VNGP). Residues 410–483 (LTSKKSNTST…STANSQSSSE (74 aa)) form a disordered region. The span at 413–430 (KKSNTSTNDNSSNTSGNQ) shows a compositional bias: low complexity. Residues 431–454 (DTDKQTNDQKNNQQEDTKNTDKNN) are compositionally biased toward basic and acidic residues.

As to quaternary structure, interacts with CdaA.

It is found in the cell membrane. Upon coexpression in E.coli stimulates the diadenylate cyclase activity of CdaA about 20-fold. In B.subtilis c-di-AMP is a second messenger that mediates growth, DNA repair and cell wall homeostasis; it is toxic when present in excess. This chain is CdaA regulatory protein CdaR, found in Bacillus subtilis (strain 168).